A 248-amino-acid polypeptide reads, in one-letter code: Ribosomal RNA small subunit methyltransferase G (248 aa).

Residues Gly-85, Phe-90, 108–110 (DSS), 137–138 (AE), and Arg-156 each bind S-adenosyl-L-methionine.

It belongs to the methyltransferase superfamily. RNA methyltransferase RsmG family.

The protein localises to the cytoplasm. In terms of biological role, specifically methylates the N7 position of a guanine in 16S rRNA. This is Ribosomal RNA small subunit methyltransferase G from Prochlorococcus marinus (strain NATL2A).